The sequence spans 512 residues: Altronate oxidoreductase (512 aa).

26-37 (VLQFGEGNFLRG) contributes to the NAD(+) binding site.

The protein belongs to the mannitol dehydrogenase family. UxaB subfamily.

It carries out the reaction D-altronate + NAD(+) = keto-D-tagaturonate + NADH + H(+). Its pathway is carbohydrate metabolism; pentose and glucuronate interconversion. In Halalkalibacterium halodurans (strain ATCC BAA-125 / DSM 18197 / FERM 7344 / JCM 9153 / C-125) (Bacillus halodurans), this protein is Altronate oxidoreductase.